Consider the following 45-residue polypeptide: Putative UPF0377 protein YJL222W-B (45 aa).

Belongs to the UPF0377 family.

The sequence is that of Putative UPF0377 protein YJL222W-B from Saccharomyces cerevisiae (strain ATCC 204508 / S288c) (Baker's yeast).